The chain runs to 147 residues: Large ribosomal subunit protein uL13 (147 aa).

This sequence belongs to the universal ribosomal protein uL13 family. In terms of assembly, part of the 50S ribosomal subunit.

Functionally, this protein is one of the early assembly proteins of the 50S ribosomal subunit, although it is not seen to bind rRNA by itself. It is important during the early stages of 50S assembly. This Pseudarthrobacter chlorophenolicus (strain ATCC 700700 / DSM 12829 / CIP 107037 / JCM 12360 / KCTC 9906 / NCIMB 13794 / A6) (Arthrobacter chlorophenolicus) protein is Large ribosomal subunit protein uL13.